Consider the following 1915-residue polypeptide: Methylcytosine dioxygenase tet3-B (1915 aa).

The interval 28–49 (RLRVSEMPSELNGGGDGSKGDG) is disordered. Residues 61–102 (SNKKRKRCGVCVPCLRKEPCGTCYNCVNRSTSHQICKMRKCE) form a CXXC-type zinc finger. Zn(2+) contacts are provided by C68, C71, C74, C80, C83, C86, C96, and C101. Positions 629 to 638 (PNSQQAPVSK) are enriched in polar residues. Disordered regions lie at residues 629-679 (PNSQ…RVKE), 776-806 (GRCP…VPGQ), and 831-880 (FSLP…LSNN). The span at 664–676 (KPPRKQVQIKKPR) shows a compositional bias: basic residues. Low complexity predominate over residues 779–793 (PTPSTGDSSSGQGDS). 2 stretches are compositionally biased toward polar residues: residues 838–854 (VPSQ…TSGV) and 864–880 (QLPS…LSNN). Zn(2+)-binding residues include C974, C976, C1034, H1060, and C1062. R1102 contacts 2-oxoglutarate. Zn(2+) is bound by residues C1112, C1114, C1130, C1139, and C1199. C1215 is a binding site for 2-oxoglutarate. H1221 lines the Zn(2+) pocket. 2 residues coordinate Fe cation: H1223 and D1225. H1257 lines the 2-oxoglutarate pocket. 3 disordered regions span residues 1298–1356 (LSEP…QTKP), 1469–1516 (GMNQ…APME), and 1719–1753 (PAVN…VKEE). The span at 1308–1339 (RQLDAKKATAEKKKLQKEKLVSPDKTKQEPSD) shows a compositional bias: basic and acidic residues. Polar residues predominate over residues 1340–1355 (TKTCQQNPGVPQQQTK). Over residues 1482-1491 (NYRRSSEVPH) the composition is skewed to basic and acidic residues. 2 stretches are compositionally biased toward polar residues: residues 1494–1503 (SLQNSNSQKS) and 1720–1732 (AVNS…SQNH). H1794 contributes to the Fe cation binding site. 1809-1811 (RIS) contacts 2-oxoglutarate. Positions 1827–1860 (LALWEAKMKQLAERARVKEEEAAKLGIKQEVKSL) form a coiled coil.

It belongs to the TET family. Requires Fe(2+) as cofactor. Zn(2+) serves as cofactor. Detected in embryo (at protein level). Detected in embryonic head, in developing brain and eye.

It is found in the nucleus. Its subcellular location is the chromosome. The catalysed reaction is a 5-methyl-2'-deoxycytidine in DNA + 2-oxoglutarate + O2 = a 5-hydroxymethyl-2'-deoxycytidine in DNA + succinate + CO2. It catalyses the reaction a 5-hydroxymethyl-2'-deoxycytidine in DNA + 2-oxoglutarate + O2 = a 5-formyl-2'-deoxycytidine in DNA + succinate + CO2 + H2O. The enzyme catalyses a 5-formyl-2'-deoxycytidine in DNA + 2-oxoglutarate + O2 = a 5-carboxyl-2'-deoxycytidine in DNA + succinate + CO2 + H(+). Dioxygenase that catalyzes the conversion of the modified genomic base 5-methylcytosine (5mC) into 5-hydroxymethylcytosine (5hmC) and plays a key role in epigenetic chromatin reprogramming during embryonic development. Conversion of 5mC into 5hmC probably constitutes the first step in cytosine demethylation. Selectively binds to the promoter region of target genes and contributes to regulate the expression of numerous developmental genes, including pax6, rax, sox9 and six3. May also contribute to the regulation of target genes in ways that do not require its enzyme activity. This Xenopus laevis (African clawed frog) protein is Methylcytosine dioxygenase tet3-B.